We begin with the raw amino-acid sequence, 329 residues long: Synaptonemal complex central element protein 1 (329 aa).

The disordered stretch occupies residues 1–29 (MATRPQPLGMEPEGSADLLHGPEGARGQY). 2 coiled-coil regions span residues 54-167 (RIEV…LETL) and 194-294 (KEQL…ILAH). Residues 291 to 329 (ILAHSTQNEEDSSWRMASPKPVEVHEETAQDQERPSSRT) form a disordered region. The segment covering 312-329 (VEVHEETAQDQERPSSRT) has biased composition (basic and acidic residues).

This sequence belongs to the SYCE family. In terms of assembly, homodimer. Found in a complex with SYCP1 and SYCE2. Interacts with SYCP1, SYCE2 and SYCE3. Interacts with SIX6OS1. In terms of tissue distribution, meiotic cells (at protein level). Expressed in the ovary and testis.

It localises to the nucleus. The protein localises to the chromosome. In terms of biological role, major component of the transverse central element of synaptonemal complexes (SCS), formed between homologous chromosomes during meiotic prophase. Requires SYCP1 in order to be incorporated into the central element. May have a role in the synaptonemal complex assembly, stabilization and recombination. In Mus musculus (Mouse), this protein is Synaptonemal complex central element protein 1 (Syce1).